Reading from the N-terminus, the 42-residue chain is uncharacterized protein (42 aa).

Its subcellular location is the plastid. It localises to the chloroplast. This is an uncharacterized protein from Diacronema lutheri (Unicellular marine alga).